We begin with the raw amino-acid sequence, 568 residues long: Proline--tRNA ligase (568 aa).

The protein belongs to the class-II aminoacyl-tRNA synthetase family. ProS type 1 subfamily. As to quaternary structure, homodimer.

Its subcellular location is the cytoplasm. The catalysed reaction is tRNA(Pro) + L-proline + ATP = L-prolyl-tRNA(Pro) + AMP + diphosphate. In terms of biological role, catalyzes the attachment of proline to tRNA(Pro) in a two-step reaction: proline is first activated by ATP to form Pro-AMP and then transferred to the acceptor end of tRNA(Pro). As ProRS can inadvertently accommodate and process non-cognate amino acids such as alanine and cysteine, to avoid such errors it has two additional distinct editing activities against alanine. One activity is designated as 'pretransfer' editing and involves the tRNA(Pro)-independent hydrolysis of activated Ala-AMP. The other activity is designated 'posttransfer' editing and involves deacylation of mischarged Ala-tRNA(Pro). The misacylated Cys-tRNA(Pro) is not edited by ProRS. This is Proline--tRNA ligase from Halothermothrix orenii (strain H 168 / OCM 544 / DSM 9562).